The primary structure comprises 479 residues: MNTILAQQIAKEGGVEAWMIAQQHKSLLRFLTCGSVDDGKSTLIGRLLHDTRQIYEDQLSSLHNDSKRHGTQGEKLDLALLVDGLQAEREQGITIDVAYRYFSTEKRKFIIADTPGHEQYTRNMATGASTCDLAILLIDARKGVLDQTRRHSFISTLLGIKHLVVAINKMDLVDYREETFARIREDYLTFAERLPGDLDIRFVPLSALEGDNVAAQSANMRWYSGPTLLEVLETVDIQRVVDRQPMRFPVQYVNRPNLDFRGYVGTLASGSIKVGERIKVLPSGVESSVSRIVTFDGDREEAYAGEAITLVLNDEIDISRGDLLLAANEALAPAQYAAIDVVWMAEQPLTPGQSYDVKLAGKKTRARVETIRYQIDINNLTQRDVESLPLNGIGLVEMAFDEPLALDIYQQNPVTGGLIFIDRLSNITVGAGMVREPVERGVTPPMEYSAFELELNALVRRHFPHWNARDLLGDKHGAA.

The tr-type G domain maps to 25 to 239; the sequence is KSLLRFLTCG…EVLETVDIQR (215 aa). The tract at residues 34-41 is G1; that stretch reads GSVDDGKS. 34-41 provides a ligand contact to GTP; the sequence is GSVDDGKS. Residues 92–96 are G2; sequence GITID. Positions 113 to 116 are G3; that stretch reads DTPG. Residues 113–117 and 168–171 contribute to the GTP site; these read DTPGH and NKMD. A G4 region spans residues 168–171; it reads NKMD. A G5 region spans residues 206-208; sequence SAL.

This sequence belongs to the TRAFAC class translation factor GTPase superfamily. Classic translation factor GTPase family. CysN/NodQ subfamily. In terms of assembly, heterodimer composed of CysD, the smaller subunit, and CysN.

It carries out the reaction sulfate + ATP + H(+) = adenosine 5'-phosphosulfate + diphosphate. It functions in the pathway sulfur metabolism; hydrogen sulfide biosynthesis; sulfite from sulfate: step 1/3. With CysD forms the ATP sulfurylase (ATPS) that catalyzes the adenylation of sulfate producing adenosine 5'-phosphosulfate (APS) and diphosphate, the first enzymatic step in sulfur assimilation pathway. APS synthesis involves the formation of a high-energy phosphoric-sulfuric acid anhydride bond driven by GTP hydrolysis by CysN coupled to ATP hydrolysis by CysD. The chain is Sulfate adenylyltransferase subunit 1 from Salmonella arizonae (strain ATCC BAA-731 / CDC346-86 / RSK2980).